Here is a 307-residue protein sequence, read N- to C-terminus: MAAITAGLVKELRDKTGAGMMDCKSALTETNGDIEAAIDWLRKKGLAKAAKKAGRVAAEGLVAVESSGHYAAAIEVNAETDFVARNPDFQAFVREAAKVALNTDGTVEAVAAAKFPGESVTVAERLTALIATIGENMTLRRSAKLSVSAGVIASYVHGAVVEGQGRIGVLVALESTGDVEKLSTLGRQIAMHIAALNPLALDASGISEETIAREKAILLEKHQGKPANVQDKIAESGIKSFFKEVTLLDQAFVHDGSKSVSQVLKEAEGQVGAPLKLTGFVRFALGEGIEKEETDFAAEVAAAAGQS.

The interval 80–83 is involved in Mg(2+) ion dislocation from EF-Tu; that stretch reads TDFV.

Belongs to the EF-Ts family.

The protein localises to the cytoplasm. Associates with the EF-Tu.GDP complex and induces the exchange of GDP to GTP. It remains bound to the aminoacyl-tRNA.EF-Tu.GTP complex up to the GTP hydrolysis stage on the ribosome. This is Elongation factor Ts from Xanthobacter autotrophicus (strain ATCC BAA-1158 / Py2).